We begin with the raw amino-acid sequence, 358 residues long: Probable tartrate dehydrogenase/decarboxylase TtuC' (358 aa).

Mn(2+) contacts are provided by D222, D246, and D250.

It belongs to the isocitrate and isopropylmalate dehydrogenases family. Requires Mg(2+) as cofactor. The cofactor is Mn(2+). K(+) serves as cofactor.

The protein localises to the cytoplasm. The catalysed reaction is tartrate + NAD(+) = 2-hydroxy-3-oxosuccinate + NADH + H(+). It carries out the reaction (2R,3S)-tartrate + NAD(+) = 2-hydroxy-3-oxosuccinate + NADH + H(+). It catalyses the reaction (2R,3R)-tartrate + NAD(+) = 2-hydroxy-3-oxosuccinate + NADH + H(+). The enzyme catalyses (2R,3R)-tartrate + H(+) = (R)-glycerate + CO2. The catalysed reaction is (R)-malate + NAD(+) = pyruvate + CO2 + NADH. It participates in carbohydrate acid metabolism; tartrate degradation; 2-hydroxy-3-oxosuccinate from L-tartrate: step 1/1. The protein operates within carbohydrate acid metabolism; tartrate degradation; 2-hydroxy-3-oxosuccinate from meso-tartrate: step 1/1. It functions in the pathway carbohydrate acid metabolism; tartrate degradation; D-glycerate from L-tartrate: step 1/1. Has multiple catalytic activities. Apart from catalyzing the oxidation of (+)-tartrate to oxaloglycolate, also converts meso-tartrate to D-glycerate and catalyzes the oxidative decarboxylation of D-malate to pyruvate. This chain is Probable tartrate dehydrogenase/decarboxylase TtuC' (ttuC'), found in Agrobacterium vitis (Rhizobium vitis).